The sequence spans 159 residues: Phosphopantetheine adenylyltransferase (159 aa).

Substrate is bound at residue threonine 10. ATP-binding positions include 10–11 and histidine 18; that span reads TF. Lysine 42, methionine 74, and arginine 88 together coordinate substrate. ATP is bound by residues 89-91, glutamate 99, and 124-130; these read GLR and WSFISSS.

The protein belongs to the bacterial CoaD family. As to quaternary structure, homohexamer. The cofactor is Mg(2+).

Its subcellular location is the cytoplasm. It carries out the reaction (R)-4'-phosphopantetheine + ATP + H(+) = 3'-dephospho-CoA + diphosphate. It functions in the pathway cofactor biosynthesis; coenzyme A biosynthesis; CoA from (R)-pantothenate: step 4/5. Reversibly transfers an adenylyl group from ATP to 4'-phosphopantetheine, yielding dephospho-CoA (dPCoA) and pyrophosphate. The polypeptide is Phosphopantetheine adenylyltransferase (Enterobacter sp. (strain 638)).